A 275-amino-acid polypeptide reads, in one-letter code: NH(3)-dependent NAD(+) synthetase (275 aa).

ATP is bound at residue 46–53 (GISGGQDS). Asp52 serves as a coordination point for Mg(2+). Arg140 contributes to the deamido-NAD(+) binding site. Position 160 (Thr160) interacts with ATP. Glu165 provides a ligand contact to Mg(2+). 2 residues coordinate deamido-NAD(+): Lys173 and Asp180. ATP-binding residues include Lys189 and Thr211. Position 260–261 (260–261 (HK)) interacts with deamido-NAD(+).

This sequence belongs to the NAD synthetase family. In terms of assembly, homodimer.

The catalysed reaction is deamido-NAD(+) + NH4(+) + ATP = AMP + diphosphate + NAD(+) + H(+). The protein operates within cofactor biosynthesis; NAD(+) biosynthesis; NAD(+) from deamido-NAD(+) (ammonia route): step 1/1. Functionally, catalyzes the ATP-dependent amidation of deamido-NAD to form NAD. Uses ammonia as a nitrogen source. This is NH(3)-dependent NAD(+) synthetase from Salmonella paratyphi A (strain ATCC 9150 / SARB42).